Reading from the N-terminus, the 320-residue chain is Phospho-N-acetylmuramoyl-pentapeptide-transferase (320 aa).

9 helical membrane passes run Leu-5–Phe-25, Met-51–Tyr-71, Gly-76–Ile-96, Val-124–Ile-144, Gly-145–Ser-165, Gly-176–Met-196, Asn-198–Phe-218, Leu-233–Phe-255, and Trp-298–Tyr-318.

Belongs to the glycosyltransferase 4 family. MraY subfamily. Requires Mg(2+) as cofactor.

The protein resides in the cell membrane. The catalysed reaction is UDP-N-acetyl-alpha-D-muramoyl-L-alanyl-gamma-D-glutamyl-L-lysyl-D-alanyl-D-alanine + di-trans,octa-cis-undecaprenyl phosphate = Mur2Ac(oyl-L-Ala-gamma-D-Glu-L-Lys-D-Ala-D-Ala)-di-trans,octa-cis-undecaprenyl diphosphate + UMP. It functions in the pathway cell wall biogenesis; peptidoglycan biosynthesis. Catalyzes the initial step of the lipid cycle reactions in the biosynthesis of the cell wall peptidoglycan: transfers peptidoglycan precursor phospho-MurNAc-pentapeptide from UDP-MurNAc-pentapeptide onto the lipid carrier undecaprenyl phosphate, yielding undecaprenyl-pyrophosphoryl-MurNAc-pentapeptide, known as lipid I. The chain is Phospho-N-acetylmuramoyl-pentapeptide-transferase from Leuconostoc citreum (strain KM20).